The following is a 185-amino-acid chain: Large ribosomal subunit protein uL5 (185 aa).

It belongs to the universal ribosomal protein uL5 family. As to quaternary structure, part of the 50S ribosomal subunit; part of the 5S rRNA/L5/L18/L25 subcomplex. Contacts the 5S rRNA and the P site tRNA. Forms a bridge to the 30S subunit in the 70S ribosome.

This is one of the proteins that bind and probably mediate the attachment of the 5S RNA into the large ribosomal subunit, where it forms part of the central protuberance. In the 70S ribosome it contacts protein S13 of the 30S subunit (bridge B1b), connecting the 2 subunits; this bridge is implicated in subunit movement. Contacts the P site tRNA; the 5S rRNA and some of its associated proteins might help stabilize positioning of ribosome-bound tRNAs. This is Large ribosomal subunit protein uL5 from Parabacteroides distasonis (strain ATCC 8503 / DSM 20701 / CIP 104284 / JCM 5825 / NCTC 11152).